Consider the following 562-residue polypeptide: Serine palmitoyltransferase 2 (562 aa).

The helical transmembrane segment at 67–87 (PMLVAVLTYVGYGVLTLFGYL) threads the bilayer. Lys379 carries the post-translational modification N6-(pyridoxal phosphate)lysine.

Belongs to the class-II pyridoxal-phosphate-dependent aminotransferase family. Component of the serine palmitoyltransferase (SPT) complex, which is composed of SPTLC1, SPTLC2 or SPTLC3 and SPTSSA or SPTSSB. The heterodimer consisting of SPTLC1 and SPTLC2/SPTLC3 forms the catalytic core of the enzyme, while SPTSSA or SPTSSB subunits determine substrate specificity. SPT also interacts with ORMDL proteins, especially ORMDL3, which negatively regulate SPT activity in the presence of ceramides. Forms dimers of heterodimers with SPTLC1. Pyridoxal 5'-phosphate serves as cofactor. As to expression, widely expressed.

It is found in the endoplasmic reticulum membrane. The enzyme catalyses L-serine + hexadecanoyl-CoA + H(+) = 3-oxosphinganine + CO2 + CoA. It carries out the reaction octadecanoyl-CoA + L-serine + H(+) = 3-oxoeicosasphinganine + CO2 + CoA. It functions in the pathway lipid metabolism; sphingolipid metabolism. Its activity is regulated as follows. SPT complex catalytic activity is negatively regulated by ORMDL proteins, including ORMDL3, in the presence of ceramides. This mechanism allows to maintain ceramide levels at sufficient concentrations for the production of complex sphingolipids, but which prevents the accumulation of ceramides to levels that trigger apoptosis. Its function is as follows. Component of the serine palmitoyltransferase multisubunit enzyme (SPT) that catalyzes the initial and rate-limiting step in sphingolipid biosynthesis by condensing L-serine and activated acyl-CoA (most commonly palmitoyl-CoA) to form long-chain bases. The SPT complex is composed of SPTLC1, SPTLC2 or SPTLC3 and SPTSSA or SPTSSB. Within this complex, the heterodimer consisting of SPTLC1 and SPTLC2/SPTLC3 forms the catalytic core. The composition of the serine palmitoyltransferase (SPT) complex determines the substrate preference. The SPTLC1-SPTLC2-SPTSSA complex shows a strong preference for C16-CoA substrate, while the SPTLC1-SPTLC3-SPTSSA isozyme uses both C14-CoA and C16-CoA as substrates, with a slight preference for C14-CoA. The SPTLC1-SPTLC2-SPTSSB complex shows a strong preference for C18-CoA substrate, while the SPTLC1-SPTLC3-SPTSSB isozyme displays an ability to use a broader range of acyl-CoAs, without apparent preference. Crucial for adipogenesis. This chain is Serine palmitoyltransferase 2, found in Homo sapiens (Human).